Here is a 396-residue protein sequence, read N- to C-terminus: 2-methyl-aconitate isomerase (396 aa).

Substrate contacts are provided by residues Ser19 and 66–70 (SSTSK). Cys104 acts as the Proton donor/acceptor in catalysis. Cys104 is subject to Cysteine sulfinic acid (-SO2H). Substrate-binding residues include Asn106, Lys278, Ser309, and His314. The active-site Proton donor/acceptor is the Met318. Gly319 contributes to the substrate binding site.

This sequence belongs to the PrpF family. Homodimer.

The enzyme catalyses 2-methyl-trans-aconitate = 2-methyl-cis-aconitate. It participates in organic acid metabolism; propanoate degradation. In terms of biological role, catalyzes the isomerization of 2-methyl-trans-aconitate to yield 2-methyl-cis-aconitate through a base-catalyzed proton abstraction coupled with a rotation about C2-C3 bond of 2-methyl-aconitate. This Cupriavidus necator (Alcaligenes eutrophus) protein is 2-methyl-aconitate isomerase.